The following is a 334-amino-acid chain: Terpene synthase 1 (334 aa).

Positions 82 and 86 each coordinate Mg(2+). Residues 82 to 86 carry the D(D/E)XX(D/E) motif motif; that stretch reads DDIFD. Arg-184 provides a ligand contact to substrate. Residues Asn-230, Ser-234, and Glu-238 each contribute to the Mg(2+) site. The NSE motif signature appears at 230-238; sequence NDIYSYHRE. The WxxxxxRY motif motif lies at 309–316; that stretch reads WSESCTRY.

The protein belongs to the terpene synthase family. Mg(2+) serves as cofactor.

It catalyses the reaction (2E,6E)-farnesyl diphosphate = gamma-muurolene + diphosphate. The enzyme catalyses (2E,6E)-farnesyl diphosphate = alpha-muurolene + diphosphate. The catalysed reaction is (2E,6E)-farnesyl diphosphate = (-)-(E)-beta-caryophyllene + diphosphate. It carries out the reaction (2E)-geranyl diphosphate = beta-myrcene + diphosphate. Terpene synthase that catalyzes the cyclization of farnesyl diphosphate (FPP) into a mixture of sesquiterpenes with gamma-muurolene as the most abundant compound and (-)-beta-caryophyllene, alpha-muurolene, and 4 unidentified sesquiterpenes as minor compoundss. TPS1 also shows monoterpene synthase activity and can also use geranyl diphosphate (GPP) as a substrate to convert it into a mixture of cyclic and acyclic monoterpenes, including myrcene and linalool. P.polycephalum has a unique biology and these volatile terpenoids could function in internal communication of P.polycephalum, to mark the territory that have been explored, or they may be involved in chemotaxis. This Physarum polycephalum (Slime mold) protein is Terpene synthase 1.